A 98-amino-acid chain; its full sequence is Biogenesis of lysosome-related organelles complex 1 subunit SNN1 (98 aa).

The stretch at 55-98 (MDEQELLQEEGSLKEELARVNQLKKRLDKLTELYAELARKCGAL) forms a coiled coil.

It belongs to the SNAPIN family. Component of the biogenesis of lysosome-related organelles complex-1 (BLOC-1).

Its subcellular location is the endosome. Component of the biogenesis of lysosome-related organelles complex-1 (BLOC-1), a complex involved in endosomal cargo sorting. In Eremothecium gossypii (strain ATCC 10895 / CBS 109.51 / FGSC 9923 / NRRL Y-1056) (Yeast), this protein is Biogenesis of lysosome-related organelles complex 1 subunit SNN1 (SNN1).